The following is a 340-amino-acid chain: NADH-quinone oxidoreductase subunit H (340 aa).

Transmembrane regions (helical) follow at residues 4 to 24 (TIGI…PLLI), 78 to 98 (YLFV…WAVI), 113 to 133 (VLYL…AGWA), 151 to 171 (VSYE…AGSM), 184 to 204 (MLHW…ISGI), 244 to 264 (SMIL…LSPF), 273 to 293 (IFFI…FLFV), and 316 to 336 (VLIP…VAHV).

Belongs to the complex I subunit 1 family. NDH-1 is composed of 14 different subunits. Subunits NuoA, H, J, K, L, M, N constitute the membrane sector of the complex.

It is found in the cell inner membrane. It catalyses the reaction a quinone + NADH + 5 H(+)(in) = a quinol + NAD(+) + 4 H(+)(out). Its function is as follows. NDH-1 shuttles electrons from NADH, via FMN and iron-sulfur (Fe-S) centers, to quinones in the respiratory chain. The immediate electron acceptor for the enzyme in this species is believed to be ubiquinone. Couples the redox reaction to proton translocation (for every two electrons transferred, four hydrogen ions are translocated across the cytoplasmic membrane), and thus conserves the redox energy in a proton gradient. This subunit may bind ubiquinone. The chain is NADH-quinone oxidoreductase subunit H from Legionella pneumophila subsp. pneumophila (strain Philadelphia 1 / ATCC 33152 / DSM 7513).